Here is a 62-residue protein sequence, read N- to C-terminus: Delta-theraphotoxin-Cg1a 3 (62 aa).

A signal peptide spans 1-21; it reads MKTSILFVIFSLALVFALSPA. Residues 22–29 constitute a propeptide that is removed on maturation; the sequence is TEIEETDR. 3 cysteine pairs are disulfide-bonded: Cys31/Cys46, Cys38/Cys51, and Cys45/Cys58.

It belongs to the neurotoxin 10 (Hwtx-1) family. 33 (Jztx-1) subfamily. As to expression, expressed by the venom gland.

The protein resides in the secreted. Moderately inhibits voltage-gated sodium channels and weakly inhibits voltage-gated potassium channel. Inhibits the inactivation of rat Nav1.2/SCN2A (IC(50)=870 nM), rat Nav1.3/SCN3A (IC(50)=845 nM), rat Nav1.4/SCN4A (IC(50)=339 nM), human Nav1.5/SCN5A (IC(50)=335 nM) and human Nav1.7/SCN9A sodium channels (IC(50)=348 nM). The toxin delays the inactivation of sodium channels without affecting the activation and steady-state inactivation kinetics in the physiological range of voltages. Site-directed mutagenesis of the sodium channel indicates that the toxin interacts with site 3 located at the extracellular S3-S4 linker of domain IV. On potassium channels, it inhibits activation of channels with an IC(50) of 8.05 uM through a voltage sensor-trapping mechanism. It increases muscle contraction in several assays (mouse phrenic nerve-diaphragm, toad heart, rat vas deferens) and is suggested to act both presynaptically and postsynaptically. The chain is Delta-theraphotoxin-Cg1a 3 from Chilobrachys guangxiensis (Chinese earth tiger tarantula).